Here is a 304-residue protein sequence, read N- to C-terminus: Quinolinate synthase 1 (304 aa).

Residues H24 and S41 each contribute to the iminosuccinate site. A [4Fe-4S] cluster-binding site is contributed by C86. Iminosuccinate contacts are provided by residues 112-114 (YVN) and S129. C171 is a binding site for [4Fe-4S] cluster. Residues 197–199 (HPE) and T214 each bind iminosuccinate. C259 serves as a coordination point for [4Fe-4S] cluster.

It belongs to the quinolinate synthase family. Type 2 subfamily. [4Fe-4S] cluster serves as cofactor.

It localises to the cytoplasm. It carries out the reaction iminosuccinate + dihydroxyacetone phosphate = quinolinate + phosphate + 2 H2O + H(+). Its pathway is cofactor biosynthesis; NAD(+) biosynthesis; quinolinate from iminoaspartate: step 1/1. In terms of biological role, catalyzes the condensation of iminoaspartate with dihydroxyacetone phosphate to form quinolinate. The chain is Quinolinate synthase 1 from Methanosarcina acetivorans (strain ATCC 35395 / DSM 2834 / JCM 12185 / C2A).